The primary structure comprises 93 residues: Small ribosomal subunit protein bS20 (93 aa).

This sequence belongs to the bacterial ribosomal protein bS20 family.

Functionally, binds directly to 16S ribosomal RNA. This Dictyoglomus turgidum (strain DSM 6724 / Z-1310) protein is Small ribosomal subunit protein bS20.